The chain runs to 144 residues: Neuritin-B (144 aa).

The signal sequence occupies residues 1-27 (MGLKLSGRYIFLVLAVHLAYLLQAVKA). The GPI-anchor amidated serine moiety is linked to residue Ser114. The propeptide at 115 to 144 (TGAPGPRLLFPAFLPLLIVFLSALLNWVLQ) is removed in mature form.

This sequence belongs to the neuritin family.

The protein resides in the cell membrane. Functionally, modulates postsynaptic dendritic arbor elaboration and synaptic maturation. The polypeptide is Neuritin-B (nrn1-b) (Xenopus laevis (African clawed frog)).